Reading from the N-terminus, the 999-residue chain is Tyrosine-protein kinase Mer (999 aa).

The first 20 residues, 1–20, serve as a signal peptide directing secretion; sequence MGPAPLPLLLGLFLPALWRR. At 21–505 the chain is on the extracellular side; the sequence is AITEAREEAK…PGNADPVLII (485 aa). Ig-like C2-type domains lie at 81-186 and 197-273; these read PQVT…EIVS and PHFT…LTVS. Residues Asn114, Asn170, Asn207, Asn215, Asn234, Asn294, Asn316, Asn329, Asn336, Asn354, Asn389, Asn395, Asn442, and Asn454 are each glycosylated (N-linked (GlcNAc...) asparagine). Cys115 and Cys175 are oxidised to a cystine. Cys218 and Cys262 are joined by a disulfide. Fibronectin type-III domains follow at residues 286–381 and 386–484; these read PPTE…TTEG and APLN…PAHG. Residues 506 to 526 traverse the membrane as a helical segment; sequence FGCFCGFILIGLILYISLAIR. Residues 527-999 lie on the Cytoplasmic side of the membrane; the sequence is KRVQETKFGN…DSSEGSEVLM (473 aa). Ser543 is subject to Phosphoserine. The 272-residue stretch at 587 to 858 folds into the Protein kinase domain; it reads LILGKILGEG…VLRLQLEKLL (272 aa). Residues 593–601 and Lys615 each bind ATP; that span reads LGEGEFGSV. The Proton acceptor role is filled by Asp723. Phosphotyrosine; by autocatalysis occurs at positions 749, 753, 754, and 872. Ser935 carries the phosphoserine modification.

This sequence belongs to the protein kinase superfamily. Tyr protein kinase family. AXL/UFO subfamily. As to quaternary structure, interacts (upon activation) with TNK2; stimulates TNK2 autophosphorylation. Interacts (via N-terminus) with extracellular ligands LGALS3, TUB, TULP1 and GAS6. Interacts with VAV1 in a phosphotyrosine-independent manner. Interacts with TIMD4; this interaction enhances TIMD4-mediated efferocytosis. Post-translationally, autophosphorylated on Tyr-749, Tyr-753 and Tyr-754 in the activation loop allowing full activity. Autophosphorylated on Tyr-872 leading to recruitment of downstream partners of the signaling cascade such as PLCG2. In terms of tissue distribution, not expressed in normal B- and T-lymphocytes but is expressed in numerous neoplastic B- and T-cell lines. Highly expressed in testis, ovary, prostate, lung, and kidney, with lower expression in spleen, small intestine, colon, and liver.

It is found in the cell membrane. The enzyme catalyses L-tyrosyl-[protein] + ATP = O-phospho-L-tyrosyl-[protein] + ADP + H(+). Functionally, receptor tyrosine kinase that transduces signals from the extracellular matrix into the cytoplasm by binding to several ligands including LGALS3, TUB, TULP1 or GAS6. Regulates many physiological processes including cell survival, migration, differentiation, and phagocytosis of apoptotic cells (efferocytosis). Ligand binding at the cell surface induces autophosphorylation of MERTK on its intracellular domain that provides docking sites for downstream signaling molecules. Following activation by ligand, interacts with GRB2 or PLCG2 and induces phosphorylation of MAPK1, MAPK2, FAK/PTK2 or RAC1. MERTK signaling plays a role in various processes such as macrophage clearance of apoptotic cells, platelet aggregation, cytoskeleton reorganization and engulfment. Functions in the retinal pigment epithelium (RPE) as a regulator of rod outer segments fragments phagocytosis. Also plays an important role in inhibition of Toll-like receptors (TLRs)-mediated innate immune response by activating STAT1, which selectively induces production of suppressors of cytokine signaling SOCS1 and SOCS3. In Homo sapiens (Human), this protein is Tyrosine-protein kinase Mer (MERTK).